A 130-amino-acid polypeptide reads, in one-letter code: Gonadotropin subunit beta-1 (130 aa).

An N-terminal signal peptide occupies residues 1–18 (MRMRFVVMVILLPALMMS). Cystine bridges form between cysteine 26/cysteine 74, cysteine 40/cysteine 89, cysteine 51/cysteine 105, cysteine 55/cysteine 107, and cysteine 110/cysteine 117. Asparagine 30 carries N-linked (GlcNAc...) asparagine glycosylation.

It belongs to the glycoprotein hormones subunit beta family. As to quaternary structure, heterodimer of an alpha and a beta chain.

The protein resides in the secreted. Involved in gametogenesis and steroidogenesis. This Carassius auratus (Goldfish) protein is Gonadotropin subunit beta-1 (cgba).